Reading from the N-terminus, the 130-residue chain is Small ribosomal subunit protein uS11 (130 aa).

It belongs to the universal ribosomal protein uS11 family. In terms of assembly, part of the 30S ribosomal subunit. Interacts with proteins S7 and S18. Binds to IF-3.

Its function is as follows. Located on the platform of the 30S subunit, it bridges several disparate RNA helices of the 16S rRNA. Forms part of the Shine-Dalgarno cleft in the 70S ribosome. In Syntrophomonas wolfei subsp. wolfei (strain DSM 2245B / Goettingen), this protein is Small ribosomal subunit protein uS11.